The primary structure comprises 425 residues: Serine--tRNA ligase (425 aa).

231 to 233 (TAE) is an L-serine binding site. 262 to 264 (RSE) provides a ligand contact to ATP. Glu285 is an L-serine binding site. 349-352 (EISS) contributes to the ATP binding site. Ser385 serves as a coordination point for L-serine.

The protein belongs to the class-II aminoacyl-tRNA synthetase family. Type-1 seryl-tRNA synthetase subfamily. In terms of assembly, homodimer. The tRNA molecule binds across the dimer.

The protein localises to the cytoplasm. The catalysed reaction is tRNA(Ser) + L-serine + ATP = L-seryl-tRNA(Ser) + AMP + diphosphate + H(+). The enzyme catalyses tRNA(Sec) + L-serine + ATP = L-seryl-tRNA(Sec) + AMP + diphosphate + H(+). It participates in aminoacyl-tRNA biosynthesis; selenocysteinyl-tRNA(Sec) biosynthesis; L-seryl-tRNA(Sec) from L-serine and tRNA(Sec): step 1/1. Its function is as follows. Catalyzes the attachment of serine to tRNA(Ser). Is also able to aminoacylate tRNA(Sec) with serine, to form the misacylated tRNA L-seryl-tRNA(Sec), which will be further converted into selenocysteinyl-tRNA(Sec). This chain is Serine--tRNA ligase, found in Exiguobacterium sibiricum (strain DSM 17290 / CCUG 55495 / CIP 109462 / JCM 13490 / 255-15).